The chain runs to 936 residues: MYATRAIARRLERHAARCKGAHVARAVRGARARTTSAPRALLDALGAGRGDADAFGTRTRRTRNAFVSSVDGDGSTGSTGSSSSSSSSAFGDSASSGGIMVSASHPSSHPQVLAVPLPRRPLMPGIIMPVKVTDEKLIAELEDMRNRGQAYVGAFLQRTDAASSASKGEGEDVFDALSAMKRTTTSVGLDGEEMVDEDEVDPADHMHDIGTFAQVHNIVRLPTDSTTGEESATLLLLGHRRLRKLGTMKRDPMVVKVEHLKDEKFDANDDIIKATTNEVVATIKDLLKTNPLHKETLQYFAQNFNDFQDPPKLADLGASMCSADDAQLQHVLELLSVKERLDATLELLKKEVEIGKLQADIGKKVEEKISGDQRRYFLMEQLKSIKKELGMERDDKTALIEKFTKRFEPKRASVPEDTAKVIDEELQKLGGLEPSSSEFNVTRNYLEWLTSLPWGVCGDEKLDISHAQEVLDSDHYGLEDVKDRILEFIAVGQLLGTTQGKIITMVGPPGVGKTSIGQSIAKALGRKFYRFSVGGMSDVAEIKGHRRTYVGAMPGKLIQCLKSTGVCNPVVLIDEIDKLGRGYQGDPASALLELLDPEQNGTFLDHYLDVPVDLSKVLFVCTANVLDTIPGPLLDRMEVVRLSGYITDEKVQIARTYLEKAAREKSGLSDVDASITDAAMGKLIGDYCREAGVRNLQKHLEKVYRKIALKVARAKSADEKLDSIVVDVDDLVDYVGQPPFATDRIYDVTPPGVVTGLAWTAMGGSTLYIECTAIDSGDGKGALKTTGQLGDVMKESSTIAHTFTRGFLELKDPGNKYLADTSLHVHVPAGATPKDGPSAGITITTSLLSLAMNKPVKPNLAMTGELTLTGRVLPIGGVKEKTIAARRSGVKTIIFPEGNKKDYDELSEDIREGLDAHFVSTYDEVYRQALDWEASS.

The N-terminal 40 residues, 1 to 40 (MYATRAIARRLERHAARCKGAHVARAVRGARARTTSAPRA), are a transit peptide targeting the mitochondrion. A disordered region spans residues 65-95 (AFVSSVDGDGSTGSTGSSSSSSSSAFGDSAS). Residues 66-95 (FVSSVDGDGSTGSTGSSSSSSSSAFGDSAS) show a composition bias toward low complexity. Positions 112–352 (VLAVPLPRRP…ATLELLKKEV (241 aa)) constitute a Lon N-terminal domain. An ATP-binding site is contributed by 507–514 (GPPGVGKT). A Lon proteolytic domain is found at 748–932 (VTPPGVVTGL…DEVYRQALDW (185 aa)). Catalysis depends on residues Ser-838 and Lys-881.

It belongs to the peptidase S16 family. Homohexamer or homoheptamer. Organized in a ring with a central cavity.

It is found in the mitochondrion matrix. It carries out the reaction Hydrolysis of proteins in presence of ATP.. Functionally, ATP-dependent serine protease that mediates the selective degradation of misfolded, unassembled or oxidatively damaged polypeptides as well as certain short-lived regulatory proteins in the mitochondrial matrix. May also have a chaperone function in the assembly of inner membrane protein complexes. Participates in the regulation of mitochondrial gene expression and in the maintenance of the integrity of the mitochondrial genome. Binds to mitochondrial DNA in a site-specific manner. The chain is Lon protease homolog, mitochondrial from Ostreococcus lucimarinus (strain CCE9901).